The chain runs to 272 residues: Putative phosphoenolpyruvate synthase regulatory protein (272 aa).

152 to 159 (GVSRSGKT) contributes to the ADP binding site.

This sequence belongs to the pyruvate, phosphate/water dikinase regulatory protein family. PSRP subfamily.

The enzyme catalyses [pyruvate, water dikinase] + ADP = [pyruvate, water dikinase]-phosphate + AMP + H(+). It catalyses the reaction [pyruvate, water dikinase]-phosphate + phosphate + H(+) = [pyruvate, water dikinase] + diphosphate. Functionally, bifunctional serine/threonine kinase and phosphorylase involved in the regulation of the phosphoenolpyruvate synthase (PEPS) by catalyzing its phosphorylation/dephosphorylation. This Methylibium petroleiphilum (strain ATCC BAA-1232 / LMG 22953 / PM1) protein is Putative phosphoenolpyruvate synthase regulatory protein.